A 269-amino-acid chain; its full sequence is Diaminopimelate epimerase (269 aa).

3 residues coordinate substrate: N15, Q49, and N66. C75 (proton donor) is an active-site residue. Residues 76–77 (GN), N155, N187, and 204–205 (ER) contribute to the substrate site. The active-site Proton acceptor is C213. 214-215 (GS) provides a ligand contact to substrate.

It belongs to the diaminopimelate epimerase family. Homodimer.

It is found in the cytoplasm. It carries out the reaction (2S,6S)-2,6-diaminopimelate = meso-2,6-diaminopimelate. Its pathway is amino-acid biosynthesis; L-lysine biosynthesis via DAP pathway; DL-2,6-diaminopimelate from LL-2,6-diaminopimelate: step 1/1. In terms of biological role, catalyzes the stereoinversion of LL-2,6-diaminopimelate (L,L-DAP) to meso-diaminopimelate (meso-DAP), a precursor of L-lysine and an essential component of the bacterial peptidoglycan. The chain is Diaminopimelate epimerase from Rickettsia bellii (strain OSU 85-389).